A 495-amino-acid polypeptide reads, in one-letter code: Aspartyl/glutamyl-tRNA(Asn/Gln) amidotransferase subunit B (495 aa).

It belongs to the GatB/GatE family. GatB subfamily. Heterotrimer of A, B and C subunits.

It catalyses the reaction L-glutamyl-tRNA(Gln) + L-glutamine + ATP + H2O = L-glutaminyl-tRNA(Gln) + L-glutamate + ADP + phosphate + H(+). The catalysed reaction is L-aspartyl-tRNA(Asn) + L-glutamine + ATP + H2O = L-asparaginyl-tRNA(Asn) + L-glutamate + ADP + phosphate + 2 H(+). In terms of biological role, allows the formation of correctly charged Asn-tRNA(Asn) or Gln-tRNA(Gln) through the transamidation of misacylated Asp-tRNA(Asn) or Glu-tRNA(Gln) in organisms which lack either or both of asparaginyl-tRNA or glutaminyl-tRNA synthetases. The reaction takes place in the presence of glutamine and ATP through an activated phospho-Asp-tRNA(Asn) or phospho-Glu-tRNA(Gln). This chain is Aspartyl/glutamyl-tRNA(Asn/Gln) amidotransferase subunit B, found in Crocosphaera subtropica (strain ATCC 51142 / BH68) (Cyanothece sp. (strain ATCC 51142)).